Consider the following 393-residue polypeptide: NADH-quinone oxidoreductase subunit D 2 (393 aa).

The protein belongs to the complex I 49 kDa subunit family. As to quaternary structure, NDH-1 is composed of 14 different subunits. Subunits NuoB, C, D, E, F, and G constitute the peripheral sector of the complex.

It is found in the cell inner membrane. The enzyme catalyses a quinone + NADH + 5 H(+)(in) = a quinol + NAD(+) + 4 H(+)(out). Its function is as follows. NDH-1 shuttles electrons from NADH, via FMN and iron-sulfur (Fe-S) centers, to quinones in the respiratory chain. The immediate electron acceptor for the enzyme in this species is believed to be a menaquinone. Couples the redox reaction to proton translocation (for every two electrons transferred, four hydrogen ions are translocated across the cytoplasmic membrane), and thus conserves the redox energy in a proton gradient. This is NADH-quinone oxidoreductase subunit D 2 from Cytophaga hutchinsonii (strain ATCC 33406 / DSM 1761 / CIP 103989 / NBRC 15051 / NCIMB 9469 / D465).